Consider the following 104-residue polypeptide: Fusaric acid biosynthesis protein 2 (104 aa).

It belongs to the YciI family.

It participates in mycotoxin biosynthesis. Functionally, part of the gene cluster that mediates the biosynthesis of fusaric acid, a mycotoxin with low to moderate toxicity to animals and humans, but with high phytotoxic properties. L-aspartate is suggested as fusaric acid amino acid precursor that is activated and further processed to O-acetyl-L-homoserine by cluster enzymes aspartate kinase FUB3 and homoserine O-acetyltransferase FUB5, as well as enzymes of the primary metabolism. The polyketide synthase (PKS) FUB1 generates the triketide trans-2-hexenal which is presumptively released by the hydrolase FUB4 and linked to the NRPS-bound amino acid precursor by NAD(P)-dependent dehydrogenase FUB6. FUB1, FUB4, and the non-canonical NRPS Fub8 may form an enzyme complex. Further processing of the NRPS-bound intermediate might be carried out by FUB6 and the sulfhydrylase FUB7, enabling a spontaneous electrocyclization to close the carbon backbone of fusaric acid. Dihydrofusaric acid is likely to be released via reduction by the thioester reductase (TR) domain of FUB8 whereupon the final oxidation to fusaric acid may (also) be performed by the FMN-dependent dehydrogenase FUB9. This Gibberella fujikuroi (strain CBS 195.34 / IMI 58289 / NRRL A-6831) (Bakanae and foot rot disease fungus) protein is Fusaric acid biosynthesis protein 2.